Reading from the N-terminus, the 264-residue chain is Acyl-[acyl-carrier-protein]--UDP-N-acetylglucosamine O-acyltransferase (264 aa).

It belongs to the transferase hexapeptide repeat family. LpxA subfamily. In terms of assembly, homotrimer.

The protein resides in the cytoplasm. It carries out the reaction a (3R)-hydroxyacyl-[ACP] + UDP-N-acetyl-alpha-D-glucosamine = a UDP-3-O-[(3R)-3-hydroxyacyl]-N-acetyl-alpha-D-glucosamine + holo-[ACP]. It functions in the pathway glycolipid biosynthesis; lipid IV(A) biosynthesis; lipid IV(A) from (3R)-3-hydroxytetradecanoyl-[acyl-carrier-protein] and UDP-N-acetyl-alpha-D-glucosamine: step 1/6. In terms of biological role, involved in the biosynthesis of lipid A, a phosphorylated glycolipid that anchors the lipopolysaccharide to the outer membrane of the cell. The protein is Acyl-[acyl-carrier-protein]--UDP-N-acetylglucosamine O-acyltransferase of Albidiferax ferrireducens (strain ATCC BAA-621 / DSM 15236 / T118) (Rhodoferax ferrireducens).